Consider the following 364-residue polypeptide: Histidinol-phosphate aminotransferase BQ2027_MB2256C (364 aa).

An N6-(pyridoxal phosphate)lysine modification is found at lysine 220.

It belongs to the class-I pyridoxal-phosphate-dependent aminotransferase family. As to quaternary structure, monomer. Pyridoxal 5'-phosphate is required as a cofactor.

It is found in the secreted. The protein localises to the cell wall. The enzyme catalyses L-histidinol phosphate + 2-oxoglutarate = 3-(imidazol-4-yl)-2-oxopropyl phosphate + L-glutamate. Aminotransferase that catalyzes the conversion of histidinol phosphate and 2-oxoglutarate into L-glutamate and imidazole acetol phosphate. Might play a significant role in mediating histidine biosynthesis during infection. Facilitates mycobacterial survival and virulence in macrophages. This is Histidinol-phosphate aminotransferase BQ2027_MB2256C from Mycobacterium bovis (strain ATCC BAA-935 / AF2122/97).